The sequence spans 376 residues: Queuine tRNA-ribosyltransferase (376 aa).

Asp-90 acts as the Proton acceptor in catalysis. Residues 90-94 (DSGGF), Asp-144, Gln-193, and Gly-220 contribute to the substrate site. The RNA binding stretch occupies residues 251-257 (GVGTPED). Asp-270 (nucleophile) is an active-site residue. Residues 275-279 (TRNAR) are RNA binding; important for wobble base 34 recognition. Residues Cys-308, Cys-310, Cys-313, and His-339 each contribute to the Zn(2+) site.

The protein belongs to the queuine tRNA-ribosyltransferase family. As to quaternary structure, homodimer. Within each dimer, one monomer is responsible for RNA recognition and catalysis, while the other monomer binds to the replacement base PreQ1. Zn(2+) serves as cofactor.

The enzyme catalyses 7-aminomethyl-7-carbaguanine + guanosine(34) in tRNA = 7-aminomethyl-7-carbaguanosine(34) in tRNA + guanine. It functions in the pathway tRNA modification; tRNA-queuosine biosynthesis. Catalyzes the base-exchange of a guanine (G) residue with the queuine precursor 7-aminomethyl-7-deazaguanine (PreQ1) at position 34 (anticodon wobble position) in tRNAs with GU(N) anticodons (tRNA-Asp, -Asn, -His and -Tyr). Catalysis occurs through a double-displacement mechanism. The nucleophile active site attacks the C1' of nucleotide 34 to detach the guanine base from the RNA, forming a covalent enzyme-RNA intermediate. The proton acceptor active site deprotonates the incoming PreQ1, allowing a nucleophilic attack on the C1' of the ribose to form the product. After dissociation, two additional enzymatic reactions on the tRNA convert PreQ1 to queuine (Q), resulting in the hypermodified nucleoside queuosine (7-(((4,5-cis-dihydroxy-2-cyclopenten-1-yl)amino)methyl)-7-deazaguanosine). The polypeptide is Queuine tRNA-ribosyltransferase (Cupriavidus metallidurans (strain ATCC 43123 / DSM 2839 / NBRC 102507 / CH34) (Ralstonia metallidurans)).